The following is a 140-amino-acid chain: Nucleoside diphosphate kinase (140 aa).

ATP is bound by residues K11, F59, R87, T93, R104, and N114. H117 (pros-phosphohistidine intermediate) is an active-site residue.

The protein belongs to the NDK family. In terms of assembly, homotetramer. Requires Mg(2+) as cofactor.

The protein localises to the cytoplasm. The enzyme catalyses a 2'-deoxyribonucleoside 5'-diphosphate + ATP = a 2'-deoxyribonucleoside 5'-triphosphate + ADP. The catalysed reaction is a ribonucleoside 5'-diphosphate + ATP = a ribonucleoside 5'-triphosphate + ADP. Major role in the synthesis of nucleoside triphosphates other than ATP. The ATP gamma phosphate is transferred to the NDP beta phosphate via a ping-pong mechanism, using a phosphorylated active-site intermediate. The chain is Nucleoside diphosphate kinase from Acidiphilium cryptum (strain JF-5).